Reading from the N-terminus, the 1273-residue chain is DNA-directed RNA polymerase subunit beta (1273 aa).

The protein belongs to the RNA polymerase beta chain family. As to quaternary structure, the RNAP catalytic core consists of 2 alpha, 1 beta, 1 beta' and 1 omega subunit. When a sigma factor is associated with the core the holoenzyme is formed, which can initiate transcription.

It catalyses the reaction RNA(n) + a ribonucleoside 5'-triphosphate = RNA(n+1) + diphosphate. Its function is as follows. DNA-dependent RNA polymerase catalyzes the transcription of DNA into RNA using the four ribonucleoside triphosphates as substrates. This Aster yellows witches'-broom phytoplasma (strain AYWB) protein is DNA-directed RNA polymerase subunit beta.